A 158-amino-acid polypeptide reads, in one-letter code: Interleukin-36 alpha (158 aa).

The propeptide occupies 1–5; sequence MEKAL. 3'-nitrotyrosine is present on Tyr-96.

This sequence belongs to the IL-1 family. Interacts with TMED10; the interaction mediates the translocation from the cytoplasm into the ERGIC (endoplasmic reticulum-Golgi intermediate compartment) and thereby secretion. Post-translationally, N-terminal truncation leads to a dramatic enhancement of its activity (&gt;1000-fold). As to expression, expressed in immune system and fetal brain, but not in other tissues tested or in multiple hematopoietic cell lines. Predominantly expressed in skin keratinocytes but not in fibroblasts, endothelial cells or melanocytes. Increased in lesional psoriasis skin.

The protein resides in the cytoplasm. The protein localises to the secreted. Its function is as follows. Cytokine that binds to and signals through the IL1RL2/IL-36R receptor which in turn activates NF-kappa-B and MAPK signaling pathways in target cells linked to a pro-inflammatory response. Part of the IL-36 signaling system that is thought to be present in epithelial barriers and to take part in local inflammatory response; similar to the IL-1 system with which it shares the coreceptor IL1RAP. Seems to be involved in skin inflammatory response by acting on keratinocytes, dendritic cells and indirectly on T-cells to drive tissue infiltration, cell maturation and cell proliferation. In cultured keratinocytes induces the expression of macrophage, T-cell, and neutrophil chemokines, such as CCL3, CCL4, CCL5, CCL2, CCL17, CCL22, CL20, CCL5, CCL2, CCL17, CCL22, CXCL8, CCL20 and CXCL1, and the production of pro-inflammatory cytokines such as TNF-alpha, IL-8 and IL-6. In cultured monocytes up-regulates expression of IL-1A, IL-1B and IL-6. In myeloid dendritic cells involved in cell maturation by up-regulating surface expression of CD83, CD86 and HLA-DR. In monocyte-derived dendritic cells facilitates dendritic cell maturation and drives T-cell proliferation. May play a role in pro-inflammatory effects in the lung. This is Interleukin-36 alpha from Homo sapiens (Human).